The chain runs to 315 residues: tRNA dimethylallyltransferase (315 aa).

15 to 22 (GPTACGKS) provides a ligand contact to ATP. Substrate is bound at residue 17-22 (TACGKS). Interaction with substrate tRNA stretches follow at residues 40-43 (DSAL) and 162-166 (QRLIR).

The protein belongs to the IPP transferase family. In terms of assembly, monomer. It depends on Mg(2+) as a cofactor.

The enzyme catalyses adenosine(37) in tRNA + dimethylallyl diphosphate = N(6)-dimethylallyladenosine(37) in tRNA + diphosphate. Its function is as follows. Catalyzes the transfer of a dimethylallyl group onto the adenine at position 37 in tRNAs that read codons beginning with uridine, leading to the formation of N6-(dimethylallyl)adenosine (i(6)A). In Buchnera aphidicola subsp. Acyrthosiphon pisum (strain APS) (Acyrthosiphon pisum symbiotic bacterium), this protein is tRNA dimethylallyltransferase.